Consider the following 481-residue polypeptide: uncharacterized protein (481 aa).

Basic residues predominate over residues 1 to 18; that stretch reads MSRLPSKTKYHSSHRSLN. Residues 1–37 are disordered; the sequence is MSRLPSKTKYHSSHRSLNRKTPLLQRSSETNSLRESG. Polar residues predominate over residues 24 to 34; sequence LQRSSETNSLR. 2 helical membrane-spanning segments follow: residues 172 to 191 and 195 to 214; these read SIST…AGAI and AAAG…YLCW.

The protein localises to the membrane. This is an uncharacterized protein from Coxiella burnetii (strain RSA 493 / Nine Mile phase I).